The chain runs to 266 residues: Undecaprenyl-diphosphatase (266 aa).

The next 7 membrane-spanning stretches (helical) occupy residues 41-61 (NLAFTIVVHVATVFSTLVVLW), 80-100 (TKYVINILISMIPIGIVGVFF), 107-127 (IFGSGLLVVGCMLLLTAALLA), 140-160 (ISMKDAFIIGLAQACAVMPGL), 180-200 (LAQFSFLMVIPPILGEALLDV), 213-233 (IPALSLAVGFMAAFVSGCVAC), and 245-265 (LIYFAIYCAIAGLVTIACTLL).

The protein belongs to the UppP family.

The protein localises to the cell inner membrane. It catalyses the reaction di-trans,octa-cis-undecaprenyl diphosphate + H2O = di-trans,octa-cis-undecaprenyl phosphate + phosphate + H(+). In terms of biological role, catalyzes the dephosphorylation of undecaprenyl diphosphate (UPP). Confers resistance to bacitracin. This Parabacteroides distasonis (strain ATCC 8503 / DSM 20701 / CIP 104284 / JCM 5825 / NCTC 11152) protein is Undecaprenyl-diphosphatase.